The following is a 460-amino-acid chain: Bifunctional protein GlmU (460 aa).

The interval 1 to 229 is pyrophosphorylase; it reads MSNYAIILAA…FEESLGVNDR (229 aa). UDP-N-acetyl-alpha-D-glucosamine is bound by residues 8-11, lysine 22, glutamine 72, and 77-78; these read LAAG and GT. Aspartate 102 contacts Mg(2+). The UDP-N-acetyl-alpha-D-glucosamine site is built by glycine 139, glutamate 154, asparagine 169, and asparagine 227. Position 227 (asparagine 227) interacts with Mg(2+). Positions 230-250 are linker; that stretch reads VALATAEDVMRRRINKTHMIN. Residues 251–460 are N-acetyltransferase; that stretch reads GVTFQNPNAT…KKPHHPSQQK (210 aa). 2 residues coordinate UDP-N-acetyl-alpha-D-glucosamine: arginine 332 and lysine 350. Histidine 362 functions as the Proton acceptor in the catalytic mechanism. UDP-N-acetyl-alpha-D-glucosamine is bound by residues tyrosine 365 and asparagine 376. Residues alanine 379, 385–386, serine 404, alanine 422, and arginine 439 each bind acetyl-CoA; that span reads NY.

In the N-terminal section; belongs to the N-acetylglucosamine-1-phosphate uridyltransferase family. The protein in the C-terminal section; belongs to the transferase hexapeptide repeat family. In terms of assembly, homotrimer. Requires Mg(2+) as cofactor.

The protein localises to the cytoplasm. It catalyses the reaction alpha-D-glucosamine 1-phosphate + acetyl-CoA = N-acetyl-alpha-D-glucosamine 1-phosphate + CoA + H(+). The enzyme catalyses N-acetyl-alpha-D-glucosamine 1-phosphate + UTP + H(+) = UDP-N-acetyl-alpha-D-glucosamine + diphosphate. Its pathway is nucleotide-sugar biosynthesis; UDP-N-acetyl-alpha-D-glucosamine biosynthesis; N-acetyl-alpha-D-glucosamine 1-phosphate from alpha-D-glucosamine 6-phosphate (route II): step 2/2. It functions in the pathway nucleotide-sugar biosynthesis; UDP-N-acetyl-alpha-D-glucosamine biosynthesis; UDP-N-acetyl-alpha-D-glucosamine from N-acetyl-alpha-D-glucosamine 1-phosphate: step 1/1. The protein operates within bacterial outer membrane biogenesis; LPS lipid A biosynthesis. Functionally, catalyzes the last two sequential reactions in the de novo biosynthetic pathway for UDP-N-acetylglucosamine (UDP-GlcNAc). The C-terminal domain catalyzes the transfer of acetyl group from acetyl coenzyme A to glucosamine-1-phosphate (GlcN-1-P) to produce N-acetylglucosamine-1-phosphate (GlcNAc-1-P), which is converted into UDP-GlcNAc by the transfer of uridine 5-monophosphate (from uridine 5-triphosphate), a reaction catalyzed by the N-terminal domain. This Streptococcus thermophilus (strain ATCC BAA-491 / LMD-9) protein is Bifunctional protein GlmU.